The chain runs to 827 residues: Beta-galactosidase 1 (827 aa).

A signal peptide spans 1–25 (MMGRRGSSWCRWWVALLVLAVAADA). The Proton donor role is filled by glutamate 187. Asparagine 198 and asparagine 249 each carry an N-linked (GlcNAc...) asparagine glycan. Glutamate 259 acts as the Nucleophile in catalysis. N-linked (GlcNAc...) asparagine glycosylation is found at asparagine 260, asparagine 366, asparagine 392, asparagine 502, asparagine 520, asparagine 578, asparagine 586, and asparagine 615. The SUEL-type lectin domain occupies 746-827 (GEAGDAVTLS…SGVLTVQATC (82 aa)).

Belongs to the glycosyl hydrolase 35 family.

It is found in the secreted. The protein localises to the extracellular space. Its subcellular location is the apoplast. It carries out the reaction Hydrolysis of terminal non-reducing beta-D-galactose residues in beta-D-galactosides.. The polypeptide is Beta-galactosidase 1 (Oryza sativa subsp. japonica (Rice)).